The primary structure comprises 136 residues: Psoriasis susceptibility 1 candidate gene 2 protein homolog (136 aa).

Residues 1–22 (MILNWKLLGILVLCLHTRGISG) form the signal peptide. The interval 20 to 136 (ISGSEDHPSH…DLDPPREEYR (117 aa)) is disordered. Basic and acidic residues predominate over residues 23–33 (SEDHPSHPPAE). Composition is skewed to pro residues over residues 44–74 (PQGP…PPWR) and 83–116 (PPEP…PPAP). A compositionally biased stretch (basic and acidic residues) spans 117–136 (EVDHRPQEEPDLDPPREEYR).

The protein localises to the secreted. The protein is Psoriasis susceptibility 1 candidate gene 2 protein homolog (PSORS1C2) of Pan troglodytes (Chimpanzee).